Reading from the N-terminus, the 143-residue chain is MTQSIIAFDIGSKTIGLAYSSGVIASSLDTIRFEEYNFDQGLKQLELYLKKYNPSIIVVGYPKNMNNTIGERAEMVDYVIEMFLDMYKSFNKDQIIKVDERRTTKIAKNILIQANLTREKQKKYKDSLAAQLILELYLESRKL.

This sequence belongs to the YqgF nuclease family.

The protein resides in the cytoplasm. Could be a nuclease involved in processing of the 5'-end of pre-16S rRNA. In Mycoplasma capricolum subsp. capricolum (strain California kid / ATCC 27343 / NCTC 10154), this protein is Putative pre-16S rRNA nuclease.